The chain runs to 489 residues: Homoserine O-acetyltransferase (489 aa).

The region spanning 47-354 (NAILVCHALT…NYGHDSFLLE (308 aa)) is the AB hydrolase-1 domain. The Nucleophile role is filled by serine 152. Residue arginine 221 participates in substrate binding. Active-site residues include aspartate 315 and histidine 348. A substrate-binding site is contributed by aspartate 349. CBS domains are found at residues 375–434 (MIED…NLEE) and 436–489 (MTKN…IEEF).

The protein belongs to the AB hydrolase superfamily. MetX family. Homodimer.

Its subcellular location is the cytoplasm. The catalysed reaction is L-homoserine + acetyl-CoA = O-acetyl-L-homoserine + CoA. Its pathway is amino-acid biosynthesis; L-methionine biosynthesis via de novo pathway; O-acetyl-L-homoserine from L-homoserine: step 1/1. In terms of biological role, transfers an acetyl group from acetyl-CoA to L-homoserine, forming acetyl-L-homoserine. The polypeptide is Homoserine O-acetyltransferase (Methanohalobium evestigatum (strain ATCC BAA-1072 / DSM 3721 / NBRC 107634 / OCM 161 / Z-7303)).